We begin with the raw amino-acid sequence, 311 residues long: Cell division control protein 2 homolog 3 (311 aa).

The region spanning 23 to 306 (YNRMDILGEG…AKAALQHPWF (284 aa)) is the Protein kinase domain. ATP contacts are provided by residues 29 to 37 (LGEGTYGVV) and Lys52. Residue Thr33 is modified to Phosphothreonine. Position 34 is a phosphotyrosine (Tyr34). Asp145 serves as the catalytic Proton acceptor.

It belongs to the protein kinase superfamily. CMGC Ser/Thr protein kinase family. CDC2/CDKX subfamily. In terms of assembly, forms a stable but non-covalent complex with a regulatory subunit and with a cyclin.

The enzyme catalyses L-seryl-[protein] + ATP = O-phospho-L-seryl-[protein] + ADP + H(+). It carries out the reaction L-threonyl-[protein] + ATP = O-phospho-L-threonyl-[protein] + ADP + H(+). Phosphorylation at Thr-33 or Tyr-34 inactivates the enzyme. Probably involved in the control of the cell cycle. In Trypanosoma brucei brucei, this protein is Cell division control protein 2 homolog 3 (CRK3).